The following is a 304-amino-acid chain: Homoserine kinase (304 aa).

90–100 provides a ligand contact to ATP; it reads PLARGLGSSAS.

This sequence belongs to the GHMP kinase family. Homoserine kinase subfamily.

Its subcellular location is the cytoplasm. It catalyses the reaction L-homoserine + ATP = O-phospho-L-homoserine + ADP + H(+). It functions in the pathway amino-acid biosynthesis; L-threonine biosynthesis; L-threonine from L-aspartate: step 4/5. Its function is as follows. Catalyzes the ATP-dependent phosphorylation of L-homoserine to L-homoserine phosphate. This Staphylococcus aureus (strain JH9) protein is Homoserine kinase.